A 94-amino-acid polypeptide reads, in one-letter code: MALTKAEVEYVAMLARLELSEADLERYTTQLNAILDYAQRLQGLDTKDVPPTAHVFPLHNVMRDDRIDPSMERERIVANAPEEEDGFFRVPRIV.

It belongs to the GatC family. In terms of assembly, heterotrimer of A, B and C subunits.

The catalysed reaction is L-glutamyl-tRNA(Gln) + L-glutamine + ATP + H2O = L-glutaminyl-tRNA(Gln) + L-glutamate + ADP + phosphate + H(+). The enzyme catalyses L-aspartyl-tRNA(Asn) + L-glutamine + ATP + H2O = L-asparaginyl-tRNA(Asn) + L-glutamate + ADP + phosphate + 2 H(+). Its function is as follows. Allows the formation of correctly charged Asn-tRNA(Asn) or Gln-tRNA(Gln) through the transamidation of misacylated Asp-tRNA(Asn) or Glu-tRNA(Gln) in organisms which lack either or both of asparaginyl-tRNA or glutaminyl-tRNA synthetases. The reaction takes place in the presence of glutamine and ATP through an activated phospho-Asp-tRNA(Asn) or phospho-Glu-tRNA(Gln). The sequence is that of Aspartyl/glutamyl-tRNA(Asn/Gln) amidotransferase subunit C from Heliobacterium modesticaldum (strain ATCC 51547 / Ice1).